The following is a 1108-amino-acid chain: Retinal guanylyl cyclase 1 (1108 aa).

The first 54 residues, 1 to 54 (MSAWLLPAGGLPGAGFCVPARQSPSSFSRVLRWPRPGLPGLLLLLLLPSPSALS), serve as a signal peptide directing secretion. Residues 55 to 465 (AVFKVGVLGP…PDVICNGGVE (411 aa)) lie on the Extracellular side of the membrane. An intrachain disulfide couples Cys-108 to Cys-136. The N-linked (GlcNAc...) asparagine glycan is linked to Asn-300. The chain crosses the membrane as a helical span at residues 466 to 490 (PGLVFVGFLLVIGMGLTGAFLAHYL). One can recognise a Protein kinase domain in the interval 491–811 (RHRLLHMQMA…DLTFDLFKSI (321 aa)). Over 491 to 1108 (RHRLLHMQMA…KARPGQFTGK (618 aa)) the chain is Cytoplasmic. The 131-residue stretch at 883-1013 (TLYFSDIVGF…DTVNTASRME (131 aa)) folds into the Guanylate cyclase domain. The interval 1069–1108 (IPKPPDLQPGASNHGISLQEIPPERRKKLEKARPGQFTGK) is disordered.

It belongs to the adenylyl cyclase class-4/guanylyl cyclase family. In terms of assembly, homodimer; requires homodimerization for guanylyl cyclase activity. Interacts (via C-terminus) with RD3 (via C-terminus); promotes the exit of GUCY2E from the endoplasmic reticulum and its trafficking to the photoreceptor outer segments. Interaction with RD3 negatively regulates GUCY2E guanylate cyclase activity. There are 9 conserved cysteine residues in sensory guanylate cyclases, 6 in the extracellular domain, which may be involved in intra- or interchain disulfide bonds.

It localises to the photoreceptor outer segment membrane. The protein resides in the endoplasmic reticulum membrane. It catalyses the reaction GTP = 3',5'-cyclic GMP + diphosphate. With respect to regulation, activated by GUCA1A when free calcium ions concentration is low, and inhibited by GUCA1A when free calcium ions concentration is high. Negatively regulated by RD3; RD3 inhibits the basal and GUCA1A-stimulated guanylate cyclase activity. Its function is as follows. Catalyzes the synthesis of cyclic GMP (cGMP) in rods and cones of photoreceptors. Plays an essential role in phototransduction, by mediating cGMP replenishment. May also participate in the trafficking of membrane-asociated proteins to the photoreceptor outer segment membrane. In Mus musculus (Mouse), this protein is Retinal guanylyl cyclase 1 (Gucy2e).